Reading from the N-terminus, the 28-residue chain is Taicatoxin, alpha-neurotoxin-like component (28 aa).

A disulfide bridge links C3 with C21.

It belongs to the three-finger toxin family. Long-chain subfamily. Type II alpha-neurotoxin sub-subfamily. In terms of assembly, heterotrimer composed of this alpha-neurotoxin-like peptide of 8 kDa, a neurotoxic phospholipase of 16 kDa (AC Q7LZG2) and a serine protease inhibitor of 7 kDa (AC B7S4N9) at an approximate stoichiometry of 1:1:4; non-covalently linked. Expressed by the venom gland.

It localises to the secreted. Its function is as follows. The heterotrimer blocks the voltage-dependent L-type calcium channels (Cav1/CACNA1) from the heart, and the small conductance calcium-activated potassium channels (KCa2/KCNN) in the chromaffin cells and in the brain. Is very toxic to mice. The protein is Taicatoxin, alpha-neurotoxin-like component of Oxyuranus scutellatus scutellatus (Australian taipan).